Consider the following 427-residue polypeptide: Gamma-glutamyl phosphate reductase (427 aa).

It belongs to the gamma-glutamyl phosphate reductase family.

The protein localises to the cytoplasm. The catalysed reaction is L-glutamate 5-semialdehyde + phosphate + NADP(+) = L-glutamyl 5-phosphate + NADPH + H(+). It functions in the pathway amino-acid biosynthesis; L-proline biosynthesis; L-glutamate 5-semialdehyde from L-glutamate: step 2/2. Catalyzes the NADPH-dependent reduction of L-glutamate 5-phosphate into L-glutamate 5-semialdehyde and phosphate. The product spontaneously undergoes cyclization to form 1-pyrroline-5-carboxylate. The polypeptide is Gamma-glutamyl phosphate reductase (Rhizobium johnstonii (strain DSM 114642 / LMG 32736 / 3841) (Rhizobium leguminosarum bv. viciae)).